The chain runs to 202 residues: Protein Mbar_A1807 (202 aa).

Residues 5 to 196 (VEGRAAVKLA…EKEPCGEVLE (192 aa)) enclose the AMMECR1 domain.

The sequence is that of Protein Mbar_A1807 from Methanosarcina barkeri (strain Fusaro / DSM 804).